A 125-amino-acid chain; its full sequence is Large ribosomal subunit protein bL12 (125 aa).

Belongs to the bacterial ribosomal protein bL12 family. In terms of assembly, homodimer. Part of the ribosomal stalk of the 50S ribosomal subunit. Forms a multimeric L10(L12)X complex, where L10 forms an elongated spine to which 2 to 4 L12 dimers bind in a sequential fashion. Binds GTP-bound translation factors.

Its function is as follows. Forms part of the ribosomal stalk which helps the ribosome interact with GTP-bound translation factors. Is thus essential for accurate translation. The sequence is that of Large ribosomal subunit protein bL12 from Rhizobium leguminosarum bv. trifolii (strain WSM2304).